The primary structure comprises 610 residues: Ecto-NOX disulfide-thiol exchanger 2 (610 aa).

Residues 128–207 (KTVFVGGLPE…GRLHVDFAQA (80 aa)) enclose the RRM domain. Coiled-coil stretches lie at residues 293–328 (IQSA…LSGI) and 381–505 (RREE…KESC).

It belongs to the ENOX family. It depends on Cu cation as a cofactor. Glycosylated. In terms of tissue distribution, found in the sera of cancer patients with a wide variety of cancers including breast, prostate, lung and ovarian cancers, leukemias, and lymphomas. Not found in the serum of healthy volunteers or patients with disorders other than cancer. Probably shed into serum by cancer cells. Found on the cell borders of renal, kidney and ovarian carcinomas but not on the borders of surrounding non-cancerous stromal cells.

It localises to the cell membrane. The protein resides in the secreted. Its subcellular location is the extracellular space. Inhibited by the antitumor sulfonylurea LY181984, the vabilloid capsaicin, and retinoids. In terms of biological role, may be involved in cell growth. Probably acts as a terminal oxidase of plasma electron transport from cytosolic NAD(P)H via hydroquinones to acceptors at the cell surface. Hydroquinone oxidase activity alternates with a protein disulfide-thiol interchange/oxidoreductase activity which may control physical membrane displacements associated with vesicle budding or cell enlargement. The activities oscillate with a period length of 22 minutes and play a role in control of the ultradian cellular biological clock. This chain is Ecto-NOX disulfide-thiol exchanger 2 (ENOX2), found in Homo sapiens (Human).